The following is a 31-amino-acid chain: Cycloviolin-A (31 aa).

Positions 1-31 (GVIPCGESCVFIPCISAAIGCSCKNKVCYRN) form a cross-link, cyclopeptide (Gly-Asn). Disulfide bonds link Cys5-Cys21, Cys9-Cys23, and Cys14-Cys28.

This is a cyclic peptide.

Its function is as follows. Probably participates in a plant defense mechanism. Has anti-HIV activity. This is Cycloviolin-A from Leonia cymosa (Sacha uba).